The following is a 125-amino-acid chain: MTGRHVSRVRSLYRRILQLHRALPPDLKALGDQYVKDEFRRHKTVGPGEAQRFLKEWETYAAVLWQQAKDSRQSSSGKACFGTSLPEEKLNDFRDEQIGQLQELMQEATKPNRQFSITESTKPHL.

The transit peptide at 1–30 (MTGRHVSRVRSLYRRILQLHRALPPDLKAL) directs the protein to the mitochondrion.

It belongs to the complex I LYR family. SDHAF3 subfamily. As to quaternary structure, interacts with Sdhb within an Sdha-Sdhb subcomplex.

Its subcellular location is the mitochondrion matrix. Its function is as follows. Plays an essential role in the assembly of succinate dehydrogenase (SDH), an enzyme complex (also referred to as respiratory complex II) that is a component of both the tricarboxylic acid (TCA) cycle and the mitochondrial electron transport chain, and which couples the oxidation of succinate to fumarate with the reduction of ubiquinone (coenzyme Q) to ubiquinol. Promotes maturation of the iron-sulfur protein subunit Sdhb of the SDH catalytic dimer, protecting it from the deleterious effects of oxidants. May act together with SDHAF1. The protein is Succinate dehydrogenase assembly factor 3, mitochondrial of Rattus norvegicus (Rat).